We begin with the raw amino-acid sequence, 330 residues long: DNA-directed RNA polymerase subunit alpha (330 aa).

An alpha N-terminal domain (alpha-NTD) region spans residues 1–237 (MYTEINEMLT…RQLHAFVDMK (237 aa)). Residues 251–330 (FDPVLLRSVD…ENWPPASLGE (80 aa)) are alpha C-terminal domain (alpha-CTD).

It belongs to the RNA polymerase alpha chain family. As to quaternary structure, homodimer. The RNAP catalytic core consists of 2 alpha, 1 beta, 1 beta' and 1 omega subunit. When a sigma factor is associated with the core the holoenzyme is formed, which can initiate transcription.

It catalyses the reaction RNA(n) + a ribonucleoside 5'-triphosphate = RNA(n+1) + diphosphate. Functionally, DNA-dependent RNA polymerase catalyzes the transcription of DNA into RNA using the four ribonucleoside triphosphates as substrates. The chain is DNA-directed RNA polymerase subunit alpha from Legionella pneumophila (strain Corby).